The following is a 59-amino-acid chain: Large ribosomal subunit protein bL32 (59 aa).

Residues 1-59 are disordered; it reads MAVQQNKKSPSKRGMHRSHDHLSAAPLAVEPTTGETHLRHHVSPNGYYRGRKVIKTKND. Basic residues-rich tracts occupy residues 9–19 and 49–59; these read SPSKRGMHRSH and RGRKVIKTKND.

This sequence belongs to the bacterial ribosomal protein bL32 family.

This is Large ribosomal subunit protein bL32 from Cupriavidus necator (strain ATCC 17699 / DSM 428 / KCTC 22496 / NCIMB 10442 / H16 / Stanier 337) (Ralstonia eutropha).